Consider the following 468-residue polypeptide: 3-isopropylmalate dehydratase large subunit (468 aa).

3 residues coordinate [4Fe-4S] cluster: Cys-345, Cys-405, and Cys-408.

This sequence belongs to the aconitase/IPM isomerase family. LeuC type 1 subfamily. Heterodimer of LeuC and LeuD. [4Fe-4S] cluster serves as cofactor.

The enzyme catalyses (2R,3S)-3-isopropylmalate = (2S)-2-isopropylmalate. Its pathway is amino-acid biosynthesis; L-leucine biosynthesis; L-leucine from 3-methyl-2-oxobutanoate: step 2/4. Functionally, catalyzes the isomerization between 2-isopropylmalate and 3-isopropylmalate, via the formation of 2-isopropylmaleate. In Oceanobacillus iheyensis (strain DSM 14371 / CIP 107618 / JCM 11309 / KCTC 3954 / HTE831), this protein is 3-isopropylmalate dehydratase large subunit.